A 205-amino-acid chain; its full sequence is MLAVFLQGFALSAAMILPLGPQNAFVMNQGIKRQHHLMSASLCALSDIILICAGIFGGSALLNRSPLLLALVTWGGVAFLLWYGWGALMAAWRGDSSSAAVAAGTQGRWRIIVTLLAVTWLNPHVYLDTFVVLGSLGGQLLPDVRPWFAFGAVSASVAWFFALALLAAWLSPWLNRPGSQRVINLLVGGVMWFIAFQLARQGLNL.

Helical transmembrane passes span 1–21 (MLAV…PLGP), 42–62 (LCAL…SALL), 67–87 (LLLA…GWGA), 111–131 (IIVT…DTFV), 147–167 (WFAF…ALLA), and 182–202 (VINL…ARQG).

The protein belongs to the LysE/ArgO transporter (TC 2.A.75) family.

Its subcellular location is the cell inner membrane. The enzyme catalyses L-arginine(in) = L-arginine(out). Functionally, involved in the export of arginine. Important to control the intracellular level of arginine and the correct balance between arginine and lysine. The sequence is that of Arginine exporter protein ArgO from Yersinia enterocolitica serotype O:8 / biotype 1B (strain NCTC 13174 / 8081).